The chain runs to 253 residues: Methionine-R-sulfoxide reductase B3, mitochondrial (253 aa).

An N-terminal signal peptide occupies residues 1 to 56; it reads MPPAAPSVARSREGGGIGQRRLVFPKSARRTLPCPIALCLGLCLAAAAATTTRASA. Residue K102 is modified to N6-acetyllysine. The 123-residue stretch at 107-229 folds into the MsrB domain; that stretch reads QQELRKRLTP…NSASLSFTPA (123 aa). Residues C146, C149, C195, and C198 each contribute to the Zn(2+) site. Catalysis depends on C218, which acts as the Nucleophile. Positions 227–253 are disordered; sequence TPADSSEAEGSGIKESGSPAAADRAEL. S244 is modified (phosphoserine). Positions 250–253 match the Endoplasmic reticulum retention signal motif; it reads RAEL.

The protein belongs to the MsrB Met sulfoxide reductase family. In terms of assembly, monomer. It depends on Zn(2+) as a cofactor. As to expression, widely expressed. Detected in the sensory epithelia of the organ of Corti and vestibular end organs as early as P2 up to adulthood (at protein level). In the organ of Corti, present in inner and outer hair cells and, to a lesser extent, in supporting cells (at protein level). In hair cells, distributed throughout the cell body. Barely detectable level in stereocilia. Also observed in spiral ganglion neurons, but not in the stria vascularis. In the vestibular end organs, found throughout the sensory epithelium, but more intense expression in hair cells than in supporting cells (at protein level). In vestibular hair cells, present within cell bodies and to a lesser extent in kinocilia. Barely detectable in stereocilia.

Its subcellular location is the endoplasmic reticulum. It carries out the reaction L-methionyl-[protein] + [thioredoxin]-disulfide + H2O = L-methionyl-(R)-S-oxide-[protein] + [thioredoxin]-dithiol. The enzyme catalyses [thioredoxin]-disulfide + L-methionine + H2O = L-methionine (R)-S-oxide + [thioredoxin]-dithiol. Functionally, catalyzes the reduction of free and protein-bound methionine sulfoxide to methionine. The polypeptide is Methionine-R-sulfoxide reductase B3, mitochondrial (Msrb3) (Mus musculus (Mouse)).